A 369-amino-acid chain; its full sequence is Cobalt-precorrin-5B C(1)-methyltransferase (369 aa).

Belongs to the CbiD family.

The catalysed reaction is Co-precorrin-5B + S-adenosyl-L-methionine = Co-precorrin-6A + S-adenosyl-L-homocysteine. It participates in cofactor biosynthesis; adenosylcobalamin biosynthesis; cob(II)yrinate a,c-diamide from sirohydrochlorin (anaerobic route): step 6/10. In terms of biological role, catalyzes the methylation of C-1 in cobalt-precorrin-5B to form cobalt-precorrin-6A. This is Cobalt-precorrin-5B C(1)-methyltransferase from Geobacter metallireducens (strain ATCC 53774 / DSM 7210 / GS-15).